Reading from the N-terminus, the 323-residue chain is Aldo-keto reductase family 1 member C2 (323 aa).

NADP(+) contacts are provided by residues 20–24 (GFGTY) and Asp50. Tyr24 is a binding site for substrate. The active-site Proton donor is Tyr55. His117 is a binding site for substrate. NADP(+) contacts are provided by residues 166–167 (SN), Gln190, and 216–222 (YSALGSH). Residues His222 and Trp227 each coordinate substrate. An NADP(+)-binding site is contributed by 270 to 280 (KSYNEQRIRQN).

This sequence belongs to the aldo/keto reductase family. As to expression, expressed in fetal testes. Expressed in fetal and adult adrenal glands.

It localises to the cytoplasm. The protein resides in the cytosol. The enzyme catalyses a 3alpha-hydroxysteroid + NADP(+) = a 3-oxosteroid + NADPH + H(+). It catalyses the reaction a 3alpha-hydroxysteroid + NAD(+) = a 3-oxosteroid + NADH + H(+). It carries out the reaction 5alpha-androstane-3alpha,17beta-diol + NADP(+) = 17beta-hydroxy-5alpha-androstan-3-one + NADPH + H(+). The catalysed reaction is 5alpha-androstane-3alpha,17beta-diol + NAD(+) = 17beta-hydroxy-5alpha-androstan-3-one + NADH + H(+). The enzyme catalyses 5alpha-androstane-3alpha,17beta-diol + NAD(+) = androsterone + NADH + H(+). It catalyses the reaction 17beta-estradiol + NADP(+) = estrone + NADPH + H(+). It carries out the reaction 17beta-estradiol + NAD(+) = estrone + NADH + H(+). The catalysed reaction is (20S)-hydroxypregn-4-en-3-one + NADP(+) = progesterone + NADPH + H(+). The enzyme catalyses (20S)-hydroxypregn-4-en-3-one + NAD(+) = progesterone + NADH + H(+). It catalyses the reaction androsterone + NADP(+) = 5alpha-androstan-3,17-dione + NADPH + H(+). It carries out the reaction (3beta,5alpha,17beta)-3-hydroxy-androstan-17-yl sulfate + NADP(+) = 5alpha-dihydrotestosterone sulfate + NADPH + H(+). The catalysed reaction is (1R,2R)-1,2-dihydrobenzene-1,2-diol + NADP(+) = catechol + NADPH + H(+). The enzyme catalyses (S)-indan-1-ol + NAD(+) = indan-1-one + NADH + H(+). It catalyses the reaction (S)-indan-1-ol + NADP(+) = indan-1-one + NADPH + H(+). It participates in steroid metabolism. Its activity is regulated as follows. Inhibited by hexestrol with an IC(50) of 2.8 uM, 1,10-phenanthroline with an IC(50) of 2100 uM, 1,7-phenanthroline with an IC(50) of 1500 uM, flufenamic acid with an IC(50) of 0.9 uM, indomethacin with an IC(50) of 75 uM, ibuprofen with an IC(50) of 6.9 uM, lithocholic acid with an IC(50) of 0.07 uM, ursodeoxycholic acid with an IC(50) of 0.08 uM and chenodeoxycholic acid with an IC(50) of 0.13 uM. The oxidation reaction is inhibited by low micromolar concentrations of NADPH. Cytosolic aldo-keto reductase that catalyzes the NADH and NADPH-dependent reduction of ketosteroids to hydroxysteroids. Most probably acts as a reductase in vivo since the oxidase activity measured in vitro is inhibited by physiological concentrations of NADPH. Displays a broad positional specificity acting on positions 3, 17 and 20 of steroids and regulates the metabolism of hormones like estrogens and androgens. Works in concert with the 5-alpha/5-beta-steroid reductases to convert steroid hormones into the 3-alpha/5-alpha and 3-alpha/5-beta-tetrahydrosteroids. Catalyzes the inactivation of the most potent androgen 5-alpha-dihydrotestosterone (5-alpha-DHT) to 5-alpha-androstane-3-alpha,17-beta-diol (3-alpha-diol). Also specifically able to produce 17beta-hydroxy-5alpha-androstan-3-one/5alphaDHT. May also reduce conjugated steroids such as 5alpha-dihydrotestosterone sulfate. Displays affinity for bile acids. The sequence is that of Aldo-keto reductase family 1 member C2 (AKR1C2) from Homo sapiens (Human).